An 851-amino-acid chain; its full sequence is Thrombospondin type-1 domain-containing protein 1 (851 aa).

The N-terminal stretch at 1–24 (MKPMLKDFSNLLLVVLCDYVLGEA) is a signal peptide. The Extracellular segment spans residues 25 to 412 (EYLLLQEPVH…SPQDPVKSNN (388 aa)). N-linked (GlcNAc...) asparagine glycans are attached at residues Asn-53, Asn-58, Asn-69, Asn-110, Asn-135, and Asn-304. The 54-residue stretch at 339–392 (IETWGPWQPWSPCSTTCGDAVRERRRLCVTSFPSRPSCSGMSSETSPCSLEECA) folds into the TSP type-1 domain. 3 disulfides stabilise this stretch: Cys-351-Cys-386, Cys-355-Cys-391, and Cys-366-Cys-376. The chain crosses the membrane as a helical span at residues 413–433 (VVTVTGISLCLFIIFATVLIT). The Cytoplasmic portion of the chain corresponds to 434 to 851 (LWRRFGRAPK…STLSVEKLVI (418 aa)). Ser-462 carries the post-translational modification Phosphoserine. Disordered regions lie at residues 471-516 (SEPR…ESFQ), 626-646 (KSQI…HSRS), and 682-777 (SRMR…SSPI). A compositionally biased stretch (basic and acidic residues) spans 685–695 (RTWDQMEDRCR). Positions 765–776 (SHRSASRKQSSP) are enriched in polar residues.

Part of a complex composed of THSD1, PTK2/FAK1, TLN1 and VCL. Interacts with TLN1. As to expression, expressed in cerebral vascular endothelium.

The protein localises to the endosome membrane. The protein resides in the cell junction. It is found in the focal adhesion. Is a positive regulator of nascent focal adhesion assembly, involved in the modulation of endothelial cell attachment to the extracellular matrix. The polypeptide is Thrombospondin type-1 domain-containing protein 1 (Thsd1) (Mus musculus (Mouse)).